A 121-amino-acid polypeptide reads, in one-letter code: Protein 3.8 (121 aa).

In Escherichia phage T7 (Bacteriophage T7), this protein is Protein 3.8.